Here is a 427-residue protein sequence, read N- to C-terminus: Methylenetetrahydrofolate--tRNA-(uracil-5-)-methyltransferase TrmFO (427 aa).

6 to 11 contacts FAD; sequence GAGLAG.

Belongs to the MnmG family. TrmFO subfamily. FAD serves as cofactor.

The protein resides in the cytoplasm. It catalyses the reaction uridine(54) in tRNA + (6R)-5,10-methylene-5,6,7,8-tetrahydrofolate + NADH + H(+) = 5-methyluridine(54) in tRNA + (6S)-5,6,7,8-tetrahydrofolate + NAD(+). It carries out the reaction uridine(54) in tRNA + (6R)-5,10-methylene-5,6,7,8-tetrahydrofolate + NADPH + H(+) = 5-methyluridine(54) in tRNA + (6S)-5,6,7,8-tetrahydrofolate + NADP(+). Functionally, catalyzes the folate-dependent formation of 5-methyl-uridine at position 54 (M-5-U54) in all tRNAs. This Acholeplasma laidlawii (strain PG-8A) protein is Methylenetetrahydrofolate--tRNA-(uracil-5-)-methyltransferase TrmFO.